The sequence spans 556 residues: Oxygen-dependent choline dehydrogenase (556 aa).

6–35 (DYIIIGAGSAGNVLAARLTEDPGVTVLLLE) serves as a coordination point for FAD. The Proton acceptor role is filled by histidine 475.

It belongs to the GMC oxidoreductase family. The cofactor is FAD.

The enzyme catalyses choline + A = betaine aldehyde + AH2. It carries out the reaction betaine aldehyde + NAD(+) + H2O = glycine betaine + NADH + 2 H(+). Its pathway is amine and polyamine biosynthesis; betaine biosynthesis via choline pathway; betaine aldehyde from choline (cytochrome c reductase route): step 1/1. Involved in the biosynthesis of the osmoprotectant glycine betaine. Catalyzes the oxidation of choline to betaine aldehyde and betaine aldehyde to glycine betaine at the same rate. This chain is Oxygen-dependent choline dehydrogenase, found in Xanthomonas euvesicatoria pv. vesicatoria (strain 85-10) (Xanthomonas campestris pv. vesicatoria).